Consider the following 261-residue polypeptide: Phosphatidylglycerol--prolipoprotein diacylglyceryl transferase (261 aa).

7 consecutive transmembrane segments (helical) span residues 19–39 (VHWY…LALY), 56–76 (LIFY…MLFY), 92–112 (WRGG…TWIF), 126–146 (FVVP…FING), 173–193 (QLYE…WFSA), 199–219 (FAVS…AEFF), and 227–247 (GFVA…MIII). Arg139 is a binding site for a 1,2-diacyl-sn-glycero-3-phospho-(1'-sn-glycerol).

It belongs to the Lgt family.

It is found in the cell inner membrane. It carries out the reaction L-cysteinyl-[prolipoprotein] + a 1,2-diacyl-sn-glycero-3-phospho-(1'-sn-glycerol) = an S-1,2-diacyl-sn-glyceryl-L-cysteinyl-[prolipoprotein] + sn-glycerol 1-phosphate + H(+). The protein operates within protein modification; lipoprotein biosynthesis (diacylglyceryl transfer). In terms of biological role, catalyzes the transfer of the diacylglyceryl group from phosphatidylglycerol to the sulfhydryl group of the N-terminal cysteine of a prolipoprotein, the first step in the formation of mature lipoproteins. The protein is Phosphatidylglycerol--prolipoprotein diacylglyceryl transferase of Coxiella burnetii (strain CbuK_Q154) (Coxiella burnetii (strain Q154)).